We begin with the raw amino-acid sequence, 258 residues long: Synapse differentiation-inducing gene protein 1-like (258 aa).

At 1-182 the chain is on the extracellular side; it reads MESLSELQNP…FIVIPPRDHL (182 aa). The chain crosses the membrane as a helical span at residues 183–203; it reads GLAIFSMLCCFWPLGIAAFYF. Residues 204–228 lie on the Cytoplasmic side of the membrane; sequence SQGTSKAVTKGDFPLASIASRRALF. A helical membrane pass occupies residues 229-249; that stretch reads LAALSITIGTGVYVGVVVALI. Over 250–258 the chain is Extracellular; the sequence is AYLSKPGHI.

This sequence belongs to the CD225/Dispanin family.

It is found in the membrane. The protein localises to the golgi apparatus. Its subcellular location is the cis-Golgi network. The chain is Synapse differentiation-inducing gene protein 1-like (syndig1l) from Danio rerio (Zebrafish).